The chain runs to 522 residues: MVLSQLNGLTSPLDERHVHALQIALKGMTPTQLAWVSGYLAGIGGGPLRMPTEPKAVERITILFGSQTGNAKAVAEQLGARASEQGMDARVISMGDFNPRKLSKEQWVLIVVSTHGEGEPPENAYALHAFIQDQGAGRLEQLPFAVLGLGDSSYEHFCRTAVDFDRRLAELGAQRILPLQCCALDYRSDTERWSSDALNRLSALAPRKASNVVAMPTLRSHQDLRSHQEQSRNRARPYDKDNPYTATLLENRRITTLDAVSDVRHLALAIEPDAMHYRPGDALGVWVENDPSLADTILAGVGIDGAARIELGDEELDLRHALIERLELTQLHPTTVRGWSRASGRTGAEDAGERLEREEQTRIYLAGNDAFRLPDAGDTPLIMIGAGTGVAPYRAFLQQRAANGHPGRNWLIFGNRHFHRDFLYQLDWQAHRKAGRLDRVSLAFSRDGAEKPYVQQRLREEGKEILRWLDAGAHLYVCGATAMGQAVDHALVEIFTIEAGLDPDCASLRRYPARECYATDDL.

The Flavodoxin-like domain occupies 60–198 (ITILFGSQTG…DTERWSSDAL (139 aa)). The segment at 217–242 (TLRSHQDLRSHQEQSRNRARPYDKDN) is disordered. The span at 220-242 (SHQDLRSHQEQSRNRARPYDKDN) shows a compositional bias: basic and acidic residues. Residues 241 to 399 (DNPYTATLLE…VAPYRAFLQQ (159 aa)) form the FAD-binding FR-type domain.

As to quaternary structure, alpha(8)-beta(8). The alpha component is a flavoprotein, the beta component is a hemoprotein. The cofactor is FAD. Requires FMN as cofactor.

It carries out the reaction hydrogen sulfide + 3 NADP(+) + 3 H2O = sulfite + 3 NADPH + 4 H(+). In terms of biological role, catalyzes the 6-electron reduction of sulfite to sulfide. This is one of several activities required for the biosynthesis of L-cysteine from sulfate. The flavo-protein component catalyzes the electron flow from NADPH -&gt; FAD -&gt; FMN to the hemoprotein component. The polypeptide is Sulfite reductase [NADPH] flavoprotein alpha-component (cysJ) (Thiocapsa roseopersicina).